A 617-amino-acid polypeptide reads, in one-letter code: Chaperone protein HscA homolog (617 aa).

The protein belongs to the heat shock protein 70 family.

Chaperone involved in the maturation of iron-sulfur cluster-containing proteins. Has a low intrinsic ATPase activity which is markedly stimulated by HscB. This is Chaperone protein HscA homolog from Vibrio campbellii (strain ATCC BAA-1116).